A 327-amino-acid chain; its full sequence is Complex I intermediate-associated protein 30, mitochondrial (327 aa).

The transit peptide at 1 to 24 (MALVHKLLRDTYILRKFSKPTSAL) directs the protein to the mitochondrion. The interval 42–63 (PVASPGKASSQRKTEGDLQGDH) is disordered. Positions 53-63 (RKTEGDLQGDH) are enriched in basic and acidic residues. Position 318 is a phosphoserine (Ser318).

The protein belongs to the CIA30 family. As to quaternary structure, part of the mitochondrial complex I assembly/MCIA complex that comprises at least the core subunits TMEM126B, NDUFAF1, ECSIT and ACAD9 and complement subunits such as COA1 and TMEM186. Interacts with ECSIT. Interacts with ACAD9. At early stages of complex I assembly, it is found in intermediate subcomplexes that contain different subunits including NDUFB6, NDUFA6, NDUFA9, NDUFS3, NDUFS7, ND1, ND2 and ND3. Interacts with TMEM70 and TMEM242.

It is found in the mitochondrion. The protein resides in the mitochondrion matrix. As part of the MCIA complex, involved in the assembly of the mitochondrial complex I. The chain is Complex I intermediate-associated protein 30, mitochondrial from Gorilla gorilla gorilla (Western lowland gorilla).